Consider the following 211-residue polypeptide: 3-demethoxyubiquinol 3-hydroxylase (211 aa).

6 residues coordinate Fe cation: glutamate 60, glutamate 90, histidine 93, glutamate 142, glutamate 174, and histidine 177.

Belongs to the COQ7 family. Requires Fe cation as cofactor.

The protein localises to the cell membrane. It carries out the reaction a 5-methoxy-2-methyl-3-(all-trans-polyprenyl)benzene-1,4-diol + AH2 + O2 = a 3-demethylubiquinol + A + H2O. Its pathway is cofactor biosynthesis; ubiquinone biosynthesis. Its function is as follows. Catalyzes the hydroxylation of 2-nonaprenyl-3-methyl-6-methoxy-1,4-benzoquinol during ubiquinone biosynthesis. The protein is 3-demethoxyubiquinol 3-hydroxylase of Acinetobacter baylyi (strain ATCC 33305 / BD413 / ADP1).